Here is a 412-residue protein sequence, read N- to C-terminus: 8-amino-7-oxononanoate synthase (412 aa).

106-107 (GY) provides a ligand contact to pyridoxal 5'-phosphate. Histidine 131 lines the substrate pocket. Serine 187, histidine 219, and threonine 247 together coordinate pyridoxal 5'-phosphate. An N6-(pyridoxal phosphate)lysine modification is found at lysine 250. Substrate is bound at residue threonine 370.

This sequence belongs to the class-II pyridoxal-phosphate-dependent aminotransferase family. BioF subfamily. In terms of assembly, homodimer. Requires pyridoxal 5'-phosphate as cofactor.

The enzyme catalyses 6-carboxyhexanoyl-[ACP] + L-alanine + H(+) = (8S)-8-amino-7-oxononanoate + holo-[ACP] + CO2. It participates in cofactor biosynthesis; biotin biosynthesis. Its function is as follows. 8-amino-7-oxononanoate synthase; part of the cluster involved in the biosynthesis of biotin (also known as vitamin B8 or vitamin H), a water-soluble vitamin that functions as a prosthetic group of many carboxylases, such as acetyl-CoA carboxylase and pyruvate carboxylase. Catalyzes the decarboxylative condensation of pimeloyl-[acyl-carrier protein] and L-alanine to produce 8-amino-7-oxononanoate (AON). This Emericella nidulans (strain FGSC A4 / ATCC 38163 / CBS 112.46 / NRRL 194 / M139) (Aspergillus nidulans) protein is 8-amino-7-oxononanoate synthase.